Reading from the N-terminus, the 260-residue chain is Glutamate racemase (260 aa).

Residues 14–15 (DS) and 46–47 (YG) each bind substrate. The active-site Proton donor/acceptor is the C77. 78 to 79 (NT) contacts substrate. The active-site Proton donor/acceptor is the C188. 189–190 (TH) is a substrate binding site.

This sequence belongs to the aspartate/glutamate racemases family.

It carries out the reaction L-glutamate = D-glutamate. Its pathway is cell wall biogenesis; peptidoglycan biosynthesis. Functionally, provides the (R)-glutamate required for cell wall biosynthesis. The sequence is that of Glutamate racemase from Clostridium perfringens (strain SM101 / Type A).